The primary structure comprises 192 residues: MSAVWIAVIAISLLGLIFGLILGYASRRFAVQDDPVVEKIDELLPQSQCGQCGYPGCRPYAEAVGAQGEKINRCAPGGEAVMLKIAALLNVDPQPVDGDEQEAEPVRMLAVIDEPNCIGCTKCIQACPVDAIVGATRAMHTVMNDLCTGCNLCVAPCPTQCISLVPVATTPETWKWDLHAIPVRNIPVEQHV.

Residues 1–26 (MSAVWIAVIAISLLGLIFGLILGYAS) are hydrophobic. The region spanning 32–91 (QDDPVVEKIDELLPQSQCGQCGYPGCRPYAEAVGAQGEKINRCAPGGEAVMLKIAALLNV) is the 4Fe-4S domain. Positions 49, 52, 57, 74, 117, 120, 123, 127, 147, 150, 153, and 157 each coordinate [4Fe-4S] cluster. 4Fe-4S ferredoxin-type domains are found at residues 108 to 137 (MLAV…GATR) and 138 to 167 (AMHT…LVPV).

This sequence belongs to the 4Fe4S bacterial-type ferredoxin family. RnfB subfamily. In terms of assembly, the complex is composed of six subunits: RnfA, RnfB, RnfC, RnfD, RnfE and RnfG. The cofactor is [4Fe-4S] cluster.

Its subcellular location is the cell inner membrane. Its function is as follows. Part of a membrane-bound complex that couples electron transfer with translocation of ions across the membrane. The polypeptide is Ion-translocating oxidoreductase complex subunit B (Klebsiella pneumoniae (strain 342)).